The sequence spans 139 residues: Large ribosomal subunit protein uL22 (139 aa).

Residues 1 to 22 (MVSENEKTRRPKRSIQHRQNKD) are disordered. Over residues 9–18 (RRPKRSIQHR) the composition is skewed to basic residues.

The protein belongs to the universal ribosomal protein uL22 family. In terms of assembly, part of the 50S ribosomal subunit.

Functionally, this protein binds specifically to 23S rRNA; its binding is stimulated by other ribosomal proteins, e.g. L4, L17, and L20. It is important during the early stages of 50S assembly. It makes multiple contacts with different domains of the 23S rRNA in the assembled 50S subunit and ribosome. The globular domain of the protein is located near the polypeptide exit tunnel on the outside of the subunit, while an extended beta-hairpin is found that lines the wall of the exit tunnel in the center of the 70S ribosome. This Pseudothermotoga lettingae (strain ATCC BAA-301 / DSM 14385 / NBRC 107922 / TMO) (Thermotoga lettingae) protein is Large ribosomal subunit protein uL22.